The primary structure comprises 368 residues: uncharacterized protein (368 aa).

Might be involved in sporulation. This is an uncharacterized protein from Brachyspira hyodysenteriae (strain ATCC 49526 / WA1).